The following is a 451-amino-acid chain: Phosphoglucosamine mutase (451 aa).

The Phosphoserine intermediate role is filled by serine 107. The Mg(2+) site is built by serine 107, aspartate 246, aspartate 248, and aspartate 250. Phosphoserine is present on serine 107.

Belongs to the phosphohexose mutase family. The cofactor is Mg(2+). Activated by phosphorylation.

The catalysed reaction is alpha-D-glucosamine 1-phosphate = D-glucosamine 6-phosphate. Functionally, catalyzes the conversion of glucosamine-6-phosphate to glucosamine-1-phosphate. The sequence is that of Phosphoglucosamine mutase from Azoarcus sp. (strain BH72).